The primary structure comprises 369 residues: uncharacterized protein (369 aa).

An N6-(pyridoxal phosphate)lysine modification is found at Lys-184.

This sequence belongs to the class-V pyridoxal-phosphate-dependent aminotransferase family. Pyridoxal 5'-phosphate serves as cofactor.

This is an uncharacterized protein from Helicobacter pylori (strain J99 / ATCC 700824) (Campylobacter pylori J99).